A 504-amino-acid polypeptide reads, in one-letter code: 2,3-bisphosphoglycerate-independent phosphoglycerate mutase (504 aa).

Residues Asp9 and Ser59 each contribute to the Mn(2+) site. The active-site Phosphoserine intermediate is Ser59. Residues His120, 149-150, Arg181, Arg187, 253-256, and Lys326 contribute to the substrate site; these read RD and RPDR. Mn(2+) is bound by residues Asp393, His397, Asp434, His435, and His451.

This sequence belongs to the BPG-independent phosphoglycerate mutase family. Requires Mn(2+) as cofactor.

The catalysed reaction is (2R)-2-phosphoglycerate = (2R)-3-phosphoglycerate. Its pathway is carbohydrate degradation; glycolysis; pyruvate from D-glyceraldehyde 3-phosphate: step 3/5. Its function is as follows. Catalyzes the interconversion of 2-phosphoglycerate and 3-phosphoglycerate. This chain is 2,3-bisphosphoglycerate-independent phosphoglycerate mutase, found in Haloquadratum walsbyi (strain DSM 16790 / HBSQ001).